The chain runs to 116 residues: Large ribosomal subunit protein bL19 (116 aa).

Belongs to the bacterial ribosomal protein bL19 family.

This protein is located at the 30S-50S ribosomal subunit interface and may play a role in the structure and function of the aminoacyl-tRNA binding site. The polypeptide is Large ribosomal subunit protein bL19 (Mycoplasma mobile (strain ATCC 43663 / 163K / NCTC 11711) (Mesomycoplasma mobile)).